Reading from the N-terminus, the 211-residue chain is External core antigen (211 aa).

The signal sequence occupies residues 1 to 19 (MHLFHLCLIILCSCPTVQA). Residues 25–27 (GWL) form an HBEAG region. Residues 165-211 (NAPILSTLPETTVVRRRRPSGRRTPSPRRRRSQSPRRRRSQSPASSC) form a disordered region. A compositionally biased stretch (basic residues) spans 178–204 (VRRRRPSGRRTPSPRRRRSQSPRRRRS). One copy of the 1; half-length repeat lies at 183–189 (PSGRRTP). The interval 183–205 (PSGRRTPSPRRRRSQSPRRRRSQ) is 3 X 8 AA repeats of S-P-R-R-R-R-S-Q. Positions 183–211 (PSGRRTPSPRRRRSQSPRRRRSQSPASSC) are excised as a propeptide. 2 consecutive repeat copies span residues 190–197 (SPRRRRSQ) and 198–205 (SPRRRRSQ).

This sequence belongs to the orthohepadnavirus precore antigen family. As to quaternary structure, homodimerizes. Phosphorylated. In terms of processing, cleaved by host furin.

Its subcellular location is the secreted. It localises to the host nucleus. Its function is as follows. May regulate immune response to the intracellular capsid in acting as a T-cell tolerogen, by having an immunoregulatory effect which prevents destruction of infected cells by cytotoxic T-cells. This immune regulation may predispose to chronicity during perinatal infections and prevent severe liver injury during adult infections. The polypeptide is External core antigen (Woolly monkey hepatitis B virus (isolate Louisville) (WMHBV)).